The chain runs to 101 residues: Large ribosomal subunit protein uL23 (101 aa).

This sequence belongs to the universal ribosomal protein uL23 family. As to quaternary structure, part of the 50S ribosomal subunit. Contacts protein L29, and trigger factor when it is bound to the ribosome.

Functionally, one of the early assembly proteins it binds 23S rRNA. One of the proteins that surrounds the polypeptide exit tunnel on the outside of the ribosome. Forms the main docking site for trigger factor binding to the ribosome. In Aromatoleum aromaticum (strain DSM 19018 / LMG 30748 / EbN1) (Azoarcus sp. (strain EbN1)), this protein is Large ribosomal subunit protein uL23.